Here is a 322-residue protein sequence, read N- to C-terminus: Arginase-1 (322 aa).

The tract at residues 1–27 (MSFKSQSIGIIGAPFSKGQPRGGVEEG) is disordered. Ser7 bears the Phosphoserine mark. Lys17 is modified (N6-succinyllysine). Ser72 bears the Phosphoserine mark. Lys75 is subject to N6-succinyllysine. The Mn(2+) site is built by His101, Asp124, His126, and Asp128. Residues 126-130 (HTDIN) and 137-139 (TGN) contribute to the substrate site. A Phosphoserine modification is found at Ser163. A substrate-binding site is contributed by Asp183. Position 217 is a phosphoserine (Ser217). Residues Asp232 and Asp234 each coordinate Mn(2+). The substrate site is built by Thr246 and Glu277.

It belongs to the arginase family. Homotrimer. Interacts with CMTM6. The cofactor is Mn(2+).

The protein localises to the cytoplasm. The enzyme catalyses L-arginine + H2O = urea + L-ornithine. Its pathway is nitrogen metabolism; urea cycle; L-ornithine and urea from L-arginine: step 1/1. The chain is Arginase-1 (ARG1) from Sus scrofa (Pig).